Reading from the N-terminus, the 137-residue chain is MQKLIIFALVVLCVGSEAKTFTRCGLVHELRKHGFEENLMRNWVCLVEHESSRDTSKTNTNRNGSKDYGLFQINDRYWCSKGASPGKDCNVKCSDLLTDDITKAAKCAKKIYKRHRFDAWYGWKNHCQGSLPDISSC.

The first 18 residues, Met-1–Ala-18, serve as a signal peptide directing secretion. Residues Lys-19–Cys-137 enclose the C-type lysozyme domain. 4 cysteine pairs are disulfide-bonded: Cys-24–Cys-137, Cys-45–Cys-127, Cys-79–Cys-93, and Cys-89–Cys-107. Catalysis depends on residues Glu-50 and Asp-67.

This sequence belongs to the glycosyl hydrolase 22 family.

It catalyses the reaction Hydrolysis of (1-&gt;4)-beta-linkages between N-acetylmuramic acid and N-acetyl-D-glucosamine residues in a peptidoglycan and between N-acetyl-D-glucosamine residues in chitodextrins.. In terms of biological role, lysozymes have primarily a bacteriolytic function; those in tissues and body fluids are associated with the monocyte-macrophage system and enhance the activity of immunoagents. Active against E.coli and M.luteus. This Bombyx mori (Silk moth) protein is Lysozyme.